The chain runs to 701 residues: UvrABC system protein B (701 aa).

The Helicase ATP-binding domain maps to 35 to 422 (RRIQGGAADT…GGDVVEQVIR (388 aa)). Residue 48 to 55 (GATGTGKT) coordinates ATP. The Beta-hairpin motif lies at 101–124 (YYDYYQPEAYVPQTDTYIEKDSSI). Residues 439 to 605 (QIDDLVHEIR…PLRKKIADIL (167 aa)) enclose the Helicase C-terminal domain. The disordered stretch occupies residues 620–648 (ARSRGEKRGTPTPRSGALSGPDRVAEQAK). Positions 656-691 (AALVEQLTEQMHQAAADLQFELAARLRDEIKELKRE) constitute a UVR domain.

The protein belongs to the UvrB family. In terms of assembly, forms a heterotetramer with UvrA during the search for lesions. Interacts with UvrC in an incision complex.

The protein localises to the cytoplasm. The UvrABC repair system catalyzes the recognition and processing of DNA lesions. A damage recognition complex composed of 2 UvrA and 2 UvrB subunits scans DNA for abnormalities. Upon binding of the UvrA(2)B(2) complex to a putative damaged site, the DNA wraps around one UvrB monomer. DNA wrap is dependent on ATP binding by UvrB and probably causes local melting of the DNA helix, facilitating insertion of UvrB beta-hairpin between the DNA strands. Then UvrB probes one DNA strand for the presence of a lesion. If a lesion is found the UvrA subunits dissociate and the UvrB-DNA preincision complex is formed. This complex is subsequently bound by UvrC and the second UvrB is released. If no lesion is found, the DNA wraps around the other UvrB subunit that will check the other stand for damage. This is UvrABC system protein B from Thermobifida fusca (strain YX).